Reading from the N-terminus, the 77-residue chain is UPF0213 protein VNG_2274C (77 aa).

Positions 1 to 75 (MHHVYVIECS…KQLSRAQKEA (75 aa)) constitute a GIY-YIG domain.

Belongs to the UPF0213 family.

This is UPF0213 protein VNG_2274C from Halobacterium salinarum (strain ATCC 700922 / JCM 11081 / NRC-1) (Halobacterium halobium).